A 310-amino-acid polypeptide reads, in one-letter code: Olfactory receptor 2A12 (310 aa).

Residues methionine 1 to leucine 24 lie on the Extracellular side of the membrane. A glycan (N-linked (GlcNAc...) asparagine) is linked at asparagine 4. Residues phenylalanine 25–isoleucine 48 form a helical membrane-spanning segment. Over tyrosine 49–threonine 56 the chain is Cytoplasmic. The chain crosses the membrane as a helical span at residues proline 57–proline 78. The Extracellular segment spans residues lysine 79–glutamine 99. An intrachain disulfide couples cysteine 96 to cysteine 188. The helical transmembrane segment at threonine 100 to tyrosine 119 threads the bilayer. The Cytoplasmic portion of the chain corresponds to aspartate 120–arginine 138. The chain crosses the membrane as a helical span at residues valine 139 to valine 157. The Extracellular segment spans residues histidine 158 to asparagine 194. A helical transmembrane segment spans residues glutamine 195 to leucine 218. Residues histidine 219–lysine 235 are Cytoplasmic-facing. A helical membrane pass occupies residues alanine 236 to tyrosine 258. At methionine 259–lysine 271 the chain is on the extracellular side. Residues isoleucine 272 to leucine 291 form a helical membrane-spanning segment. The Cytoplasmic portion of the chain corresponds to arginine 292–methionine 310.

This sequence belongs to the G-protein coupled receptor 1 family.

Its subcellular location is the cell membrane. Its function is as follows. Odorant receptor. The chain is Olfactory receptor 2A12 (OR2A12) from Homo sapiens (Human).